A 100-amino-acid polypeptide reads, in one-letter code: Small ribosomal subunit protein uS14c (100 aa).

Residues 1 to 31 are disordered; sequence MAKKSLIQREKKRQKLEQKYHSIRRSSKKEI.

The protein belongs to the universal ribosomal protein uS14 family. As to quaternary structure, part of the 30S ribosomal subunit.

The protein localises to the plastid. It is found in the chloroplast. In terms of biological role, binds 16S rRNA, required for the assembly of 30S particles. The sequence is that of Small ribosomal subunit protein uS14c from Atropa belladonna (Belladonna).